The sequence spans 1252 residues: DNA-directed RNA polymerase subunit beta (1252 aa).

It belongs to the RNA polymerase beta chain family. As to quaternary structure, the RNAP catalytic core consists of 2 alpha, 1 beta, 1 beta' and 1 omega subunit. When a sigma factor is associated with the core the holoenzyme is formed, which can initiate transcription.

It carries out the reaction RNA(n) + a ribonucleoside 5'-triphosphate = RNA(n+1) + diphosphate. Its function is as follows. DNA-dependent RNA polymerase catalyzes the transcription of DNA into RNA using the four ribonucleoside triphosphates as substrates. The sequence is that of DNA-directed RNA polymerase subunit beta from Chlamydia muridarum (strain MoPn / Nigg).